The chain runs to 264 residues: Thymidylate synthase (264 aa).

Position 21 (R21) interacts with dUMP. Residue H51 coordinates (6R)-5,10-methylene-5,6,7,8-tetrahydrofolate. 126-127 is a binding site for dUMP; it reads RR. The active-site Nucleophile is the C146. Residues 166-169, N177, and 207-209 contribute to the dUMP site; these read RSAD and HLY. (6R)-5,10-methylene-5,6,7,8-tetrahydrofolate is bound at residue D169. (6R)-5,10-methylene-5,6,7,8-tetrahydrofolate is bound at residue A263.

Belongs to the thymidylate synthase family. Bacterial-type ThyA subfamily. Homodimer.

Its subcellular location is the cytoplasm. It catalyses the reaction dUMP + (6R)-5,10-methylene-5,6,7,8-tetrahydrofolate = 7,8-dihydrofolate + dTMP. Its pathway is pyrimidine metabolism; dTTP biosynthesis. In terms of biological role, catalyzes the reductive methylation of 2'-deoxyuridine-5'-monophosphate (dUMP) to 2'-deoxythymidine-5'-monophosphate (dTMP) while utilizing 5,10-methylenetetrahydrofolate (mTHF) as the methyl donor and reductant in the reaction, yielding dihydrofolate (DHF) as a by-product. This enzymatic reaction provides an intracellular de novo source of dTMP, an essential precursor for DNA biosynthesis. In Cupriavidus necator (strain ATCC 17699 / DSM 428 / KCTC 22496 / NCIMB 10442 / H16 / Stanier 337) (Ralstonia eutropha), this protein is Thymidylate synthase.